A 497-amino-acid polypeptide reads, in one-letter code: Putative aldehyde dehydrogenase AldA (497 aa).

213 to 219 is a binding site for NAD(+); it reads GKGSESG. Catalysis depends on residues Glu-257 and Cys-291.

This sequence belongs to the aldehyde dehydrogenase family.

The enzyme catalyses an aldehyde + NAD(+) + H2O = a carboxylate + NADH + 2 H(+). This is Putative aldehyde dehydrogenase AldA (aldA) from Staphylococcus epidermidis (strain ATCC 35984 / DSM 28319 / BCRC 17069 / CCUG 31568 / BM 3577 / RP62A).